A 156-amino-acid chain; its full sequence is Cyanate hydratase (156 aa).

Active-site residues include R96, E99, and S122.

It belongs to the cyanase family. In terms of assembly, homodecamer composed of five homodimers.

It carries out the reaction cyanate + hydrogencarbonate + 3 H(+) = NH4(+) + 2 CO2. Functionally, catalyzes the reaction of cyanate with bicarbonate to produce ammonia and carbon dioxide. The polypeptide is Cyanate hydratase (cynS) (Escherichia coli O157:H7).